The chain runs to 309 residues: Mitochondrial phosphate carrier protein 1, mitochondrial (309 aa).

The Mitochondrial intermembrane portion of the chain corresponds to 1–15 (MTRVKSKLDEELSSP). Residues 16 to 36 (WFYTVCTMGGMLSAGTTHLAI) form a helical membrane-spanning segment. Solcar repeat units lie at residues 16-100 (WFYT…FKTL), 109-193 (NRTS…SVEF), and 210-289 (QQLG…IKVL). Over 37-74 (TPLDVLKVNMQVNPVKYNSIPSGFSTLLREHGHSYLWR) the chain is Mitochondrial matrix. Residues 75–94 (GWSGKLLGYGVQGGCRFGLY) form a helical membrane-spanning segment. Over 95-111 (EYFKTLYSDVLPNHNRT) the chain is Mitochondrial intermembrane. A helical membrane pass occupies residues 112-132 (SIYFLSSASAQIFADMALCPF). Residues 133-167 (EAIKVRVQTQPMFAKGLLDGFPRVYRSEGLAGFHR) lie on the Mitochondrial matrix side of the membrane. A helical transmembrane segment spans residues 168–187 (GLFPLWCRNLPFSMVMFSTF). Residues 188-208 (EQSVEFIYQKIIQKRKQDCSK) are Mitochondrial intermembrane-facing. A helical membrane pass occupies residues 209–229 (AQQLGVTCLAGYTAGAVGTII). The Mitochondrial matrix segment spans residues 230–268 (SNPADVVLSSLYNNKAKNVLQAVRNIGFVGLFTRSLPVR). The helical transmembrane segment at 269 to 289 (ITIVGPVITLQWFFYDAIKVL) threads the bilayer. Residues 290–309 (SGFPTSGGVKKPVDAAKLSV) are Mitochondrial intermembrane-facing.

It belongs to the mitochondrial carrier (TC 2.A.29) family. In terms of tissue distribution, expressed in stems, leaves and flowers. Strong expression in the stamens of flowers.

Its subcellular location is the mitochondrion inner membrane. Its function is as follows. Transport of phosphate groups from the cytosol to the mitochondrial matrix. Mediates salt stress tolerance through an ATP-dependent pathway and via modulation of the gibberellin metabolism. The sequence is that of Mitochondrial phosphate carrier protein 1, mitochondrial (MPT1) from Arabidopsis thaliana (Mouse-ear cress).